The chain runs to 700 residues: Glycine--tRNA ligase beta subunit (700 aa).

It belongs to the class-II aminoacyl-tRNA synthetase family. Tetramer of two alpha and two beta subunits.

It is found in the cytoplasm. It carries out the reaction tRNA(Gly) + glycine + ATP = glycyl-tRNA(Gly) + AMP + diphosphate. This chain is Glycine--tRNA ligase beta subunit, found in Magnetococcus marinus (strain ATCC BAA-1437 / JCM 17883 / MC-1).